We begin with the raw amino-acid sequence, 552 residues long: Lon protease 2 (552 aa).

97 to 104 is a binding site for ATP; that stretch reads GPPGVGKT. In terms of domain architecture, Lon proteolytic spans 349-535; sequence EPQVGIVNGL…QEVLDEILVN (187 aa). Residues serine 445 and lysine 488 contribute to the active site.

Belongs to the peptidase S16 family. In terms of assembly, homohexamer. Organized in a ring with a central cavity.

The protein localises to the cytoplasm. The enzyme catalyses Hydrolysis of proteins in presence of ATP.. Its function is as follows. ATP-dependent serine protease that mediates the selective degradation of mutant and abnormal proteins as well as certain short-lived regulatory proteins. Required for cellular homeostasis and for survival from DNA damage and developmental changes induced by stress. Degrades polypeptides processively to yield small peptide fragments that are 5 to 10 amino acids long. Binds to DNA in a double-stranded, site-specific manner. In Bacillus subtilis (strain 168), this protein is Lon protease 2 (lon2).